A 207-amino-acid chain; its full sequence is Protein Nef (207 aa).

A lipid anchor (N-myristoyl glycine; by host) is attached at Gly2. Phosphoserine; by host is present on Ser6. Residues 63–66 are acidic; interacts with host PACS1 and PACS2; stabilizes the interaction of NEF/MHC-I with host AP1M1; necessary for MHC-I internalization; it reads EEZE. The SH3-binding; interaction with Src family tyrosine kinases stretch occupies residues 70 to 79; sequence PVRPQVPLRP. Positions 73 to 76 match the PxxP; stabilizes the interaction of NEF/MHC-I with host AP1M1; necessary for MHC-I internalization motif; the sequence is PQVP. Residues 109 to 125 form a mediates dimerization, Nef-PTE1 interaction region; sequence EILDLWVYHTQGFFPDW. The segment at 149-181 is binding to ATP6V1H; the sequence is LSEEAVEEANEGDNNALLHPICQHGVDDDHKQV. A Dileucine internalization motif; necessary for CD4 internalization motif is present at residues 165–166; that stretch reads LL. The short motif at 175-176 is the Diacidic; necessary for CD4 internalization element; that stretch reads DD.

The protein belongs to the lentivirus primate group Nef protein family. Monomer; cytosolic form. Homodimer; membrane bound form. Interacts with Nef associated p21-activated kinase (PAK2); this interaction activates PAK2. Associates with the Nef-MHC-I-AP1 complex; this complex is required for MHC-I internalization. Interacts (via C-terminus) with host PI3-kinase. Interacts with host PACS1; this interaction seems to be weak. Interacts with host PACS2. Interacts with host LCK and MAPK3; these interactions inhibit the kinase activity of the latter. Interacts with host ATP6V1H; this interaction may play a role in CD4 endocytosis. Associates with the CD4-Nef-AP2 complex; this complex is required for CD4 internalization. Interacts with host AP2 subunit alpha and AP2 subunit sigma2. Interacts with TCR-zeta chain; this interaction up-regulates the Fas ligand (FasL) surface expression. Interacts with host HCK, LYN, and SRC; these interactions activate the Src family kinases. Interacts with MAP3K5; this interaction inhibits the Fas and TNFR-mediated death signals. Interacts with beta-COP and PTE1. Interacts with human RACK1; this increases Nef phosphorylation by PKC. Interacts with TP53; this interaction decreases the half-life of TP53, protecting the infected cell against p53-mediated apoptosis. The virion-associated Nef proteins are cleaved by the viral protease to release the soluble C-terminal core protein. Nef is probably cleaved concomitantly with viral structural proteins on maturation of virus particles. In terms of processing, myristoylated. Post-translationally, phosphorylated on serine residues, probably by host PKCdelta and theta.

The protein localises to the host cell membrane. It is found in the virion. Its subcellular location is the secreted. It localises to the host Golgi apparatus membrane. Factor of infectivity and pathogenicity, required for optimal virus replication. Alters numerous pathways of T-lymphocyte function and down-regulates immunity surface molecules in order to evade host defense and increase viral infectivity. Alters the functionality of other immunity cells, like dendritic cells, monocytes/macrophages and NK cells. Its function is as follows. In infected CD4(+) T-lymphocytes, down-regulates the surface MHC-I, mature MHC-II, CD4, CD28, CCR5 and CXCR4 molecules. Mediates internalization and degradation of host CD4 through the interaction of with the cytoplasmic tail of CD4, the recruitment of AP-2 (clathrin adapter protein complex 2), internalization through clathrin coated pits, and subsequent transport to endosomes and lysosomes for degradation. Diverts host MHC-I molecules to the trans-Golgi network-associated endosomal compartments by an endocytic pathway to finally target them for degradation. MHC-I down-regulation may involve AP-1 (clathrin adapter protein complex 1) or possibly Src family kinase-ZAP70/Syk-PI3K cascade recruited by PACS2. In consequence infected cells are masked for immune recognition by cytotoxic T-lymphocytes. Decreasing the number of immune receptors also prevents reinfection by more HIV particles (superinfection). Down-regulates host SERINC3 and SERINC5 thereby excluding these proteins from the viral particles. Virion infectivity is drastically higher when SERINC3 or SERINC5 are excluded from the viral envelope, because these host antiviral proteins impair the membrane fusion event necessary for subsequent virion penetration. Functionally, bypasses host T-cell signaling by inducing a transcriptional program nearly identical to that of anti-CD3 cell activation. Interaction with TCR-zeta chain up-regulates the Fas ligand (FasL). Increasing surface FasL molecules and decreasing surface MHC-I molecules on infected CD4(+) cells send attacking cytotoxic CD8+ T-lymphocytes into apoptosis. In terms of biological role, plays a role in optimizing the host cell environment for viral replication without causing cell death by apoptosis. Protects the infected cells from apoptosis in order to keep them alive until the next virus generation is ready to strike. Inhibits the Fas and TNFR-mediated death signals by blocking MAP3K5/ASK1. Decreases the half-life of TP53, protecting the infected cell against p53-mediated apoptosis. Inhibits the apoptotic signals regulated by the Bcl-2 family proteins through the formation of a Nef/PI3-kinase/PAK2 complex that leads to activation of PAK2 and induces phosphorylation of host BAD. Extracellular Nef protein targets CD4(+) T-lymphocytes for apoptosis by interacting with CXCR4 surface receptors. In Homo sapiens (Human), this protein is Protein Nef.